The sequence spans 49 residues: IDHRCGREATPPGKLCNDGRCCSQWGWCGTTQAYCSGKCQSQCDCNRDL.

Positions 2 to 45 constitute a Chitin-binding type-1 domain; that stretch reads DHRCGREATPPGKLCNDGRCCSQWGWCGTTQAYCSGKCQSQCDC. Disulfide bonds link cysteine 5-cysteine 22, cysteine 16-cysteine 28, cysteine 21-cysteine 35, and cysteine 39-cysteine 43.

As to quaternary structure, homodimer; disulfide-linked.

Its function is as follows. Chitin-binding lectin which is specific for N-acetylglucosamine oligomers. The polypeptide is Chitin-binding lectin (Viscum album (European mistletoe)).